A 414-amino-acid chain; its full sequence is Putative ankyrin repeat protein BB_B28 (414 aa).

2 ANK repeats span residues 326–355 and 359–389; these read NGNP…NINL and NSQT…NPNI.

This is Putative ankyrin repeat protein BB_B28 from Borreliella burgdorferi (strain ATCC 35210 / DSM 4680 / CIP 102532 / B31) (Borrelia burgdorferi).